A 521-amino-acid polypeptide reads, in one-letter code: MGFKLKGFGFLTLFASQAFLTACSATLTVANTNHKNESDKFVIFEPQPPLSQTIPKPEAEPVIEPDAVATPPVQNAEVQIKPDSSKGVYSPGFKFNTNFIPKVNTKYRPGYDLSFALKFGTSWKEAYGTGWLIDWKDVKQDNKFTAYLATNLHVADSLRNKDDYKPYNKDGNQKEFLPGDITTEFSLGKYIDAQTVQKLTPEYQNLKHLNNRNSDALVSIQTSKLPKTAYTATDFIKTAQYKYNHIVSNTVYELDLFQNAVSYADFAVLELELNLANNRDQQIFDSFINPAVTAYEKLGNSLGLFSNLQLDQYVDDTHYLLGYPLLKREKTSYWNLPQKGYSSPLYENSNKEVSRITRNIRKDDEIPGSRLVQNQINYLPFAQNDPKGVMDFSKYLNYVFNYHEKQYQHHGYGLLLEDTDFPGGSSGSPLFNQNKQINSIYFAALPSKSYGVSQILRATQNKDKSKNYDLIFGDSNTKKYYAQFAKEHKTHLYHQILQSNDEQFRFVENDQTVTSQTPFKS.

An N-terminal signal peptide occupies residues 1 to 22 (MGFKLKGFGFLTLFASQAFLTA). C23 carries N-palmitoyl cysteine lipidation. A lipid anchor (S-diacylglycerol cysteine) is attached at C23.

It belongs to the MG067/MG068/MG395 family.

The protein resides in the cell membrane. This is an uncharacterized protein from Mycoplasma pneumoniae (strain ATCC 29342 / M129 / Subtype 1) (Mycoplasmoides pneumoniae).